The following is a 504-amino-acid chain: MASLYLPTIWASTLTAATIFIVAVLSKWLRKPRSFDVPIVGAESGDLNVLKARYVQEADALLREGYEKFKDAIFQVITPDGPRVFLPRKYAHDLKDYSRHEASGMKALADRHIGHYTTIDHESDIMLGAIKIDLNRNLGTFVGDVEHEVAFCFETQFPACDDWTPIDLHDKLLRVVAQASARIFVGYPMCRNEEWLECSTKFALDVMTGGEKLKQWHPYLRPIAQYFVPEMTRIRGDHQRALELLLPELNRRLAEPADPDSSPHNDMIQWMQDRARKTGDNSFDNKELANLQMLTATAAIHTTRLAIIHALYDLAARPEYVEPLRKEILEATKDSNGVLQKQHLTQMKMLDSFMKESQRHSPPSVATYQRKAMIPITLSNGFHIPAGTIVQCNTNILDETPPDWGDPHAFDGFRFYKLRNRTPDDINKFQFASPTYDSMQFGFGKDACPGRFFASNQIKIILAYILSHYDIKFEDSVVGRPKNFMFEVNVLADPTKMVLFKKIR.

The chain crosses the membrane as a helical span at residues 4–24; the sequence is LYLPTIWASTLTAATIFIVAV. Cys-448 lines the heme pocket.

Belongs to the cytochrome P450 family. Heme serves as cofactor.

It localises to the membrane. It participates in secondary metabolite biosynthesis. Cytochrome P450 monooxygenase; part of the gene cluster that mediates the biosynthesis of the brasilane terpene glycosides brasilane D and E. The biosynthesis starts with the activity of the terpene cyclase braA that converts farnesyl pyrophosphate into the sesquiterpene alcohol trichobrasilenol. Subsequently, trichobrasilenol is glycosylated by the O-glycosyltransferase braB putatively using UDP-GlcNAc as sugar donor to yield brasilane A. The latter then undergoes two rounds of oxidation performed by the cytochrome P450 monooxygenase braC. In the first round braC hydroxylates C-12 forming brasilane D, which serves as substrate in the second round to establish the epoxide at the bond between C-5 and C-10 and oxidize the alcohol at C-12 to an aldehyde leading to the final product brasilane E. The protein is Cytochrome P450 monooxygenase braC of Annulohypoxylon truncatum (Hypoxylon truncatum).